The sequence spans 89 residues: Small ribosomal subunit protein bS20 (89 aa).

It belongs to the bacterial ribosomal protein bS20 family.

Binds directly to 16S ribosomal RNA. The chain is Small ribosomal subunit protein bS20 from Helicobacter acinonychis (strain Sheeba).